A 662-amino-acid polypeptide reads, in one-letter code: UvrABC system protein B (662 aa).

Residues 25-182 form the Helicase ATP-binding domain; the sequence is KGIEKGEKFQ…KKLVEIQYER (158 aa). 38–45 is an ATP binding site; it reads GVTGSGKT. Residues 91-114 carry the Beta-hairpin motif; that stretch reads YYDYYQPEAYVAQSDTYIEKDASI. A Helicase C-terminal domain is found at 429 to 595; that stretch reads QIDDLYTSIQ…TIIKDIREVI (167 aa). Residues 622 to 657 enclose the UVR domain; the sequence is DKLIEKYEEEMREAAQNLQFEKAAHLRDVIYKLKRD.

It belongs to the UvrB family. As to quaternary structure, forms a heterotetramer with UvrA during the search for lesions. Interacts with UvrC in an incision complex.

It localises to the cytoplasm. The UvrABC repair system catalyzes the recognition and processing of DNA lesions. A damage recognition complex composed of 2 UvrA and 2 UvrB subunits scans DNA for abnormalities. Upon binding of the UvrA(2)B(2) complex to a putative damaged site, the DNA wraps around one UvrB monomer. DNA wrap is dependent on ATP binding by UvrB and probably causes local melting of the DNA helix, facilitating insertion of UvrB beta-hairpin between the DNA strands. Then UvrB probes one DNA strand for the presence of a lesion. If a lesion is found the UvrA subunits dissociate and the UvrB-DNA preincision complex is formed. This complex is subsequently bound by UvrC and the second UvrB is released. If no lesion is found, the DNA wraps around the other UvrB subunit that will check the other stand for damage. The sequence is that of UvrABC system protein B from Clostridium botulinum (strain 657 / Type Ba4).